A 335-amino-acid polypeptide reads, in one-letter code: Large ribosomal subunit protein uL10 (335 aa).

Residues 304-335 (GAAAPVEEAPVEEKKEEKKEEAAAPAGLGMLF) form a disordered region. Residues 314–325 (VEEKKEEKKEEA) show a composition bias toward basic and acidic residues.

This sequence belongs to the universal ribosomal protein uL10 family. In terms of assembly, part of the 50S ribosomal subunit. Homodimer, it forms part of the ribosomal stalk which helps the ribosome interact with GTP-bound translation factors. Forms both a pentameric L10(L12)2(L12)2 and heptameric L10(L12)2(L12)2(L12)2 complex, where L10 forms an elongated spine to which the L12 dimers bind in a sequential fashion. The proportion of heptameric complexes increases during cell growth.

Its function is as follows. Forms part of the ribosomal stalk, playing a central role in the interaction of the ribosome with GTP-bound translation factors. The chain is Large ribosomal subunit protein uL10 from Methanococcus maripaludis (strain DSM 14266 / JCM 13030 / NBRC 101832 / S2 / LL).